Consider the following 91-residue polypeptide: Tityustoxin-19 (91 aa).

The signal sequence occupies residues 1 to 25 (MVATNRCCVFALLFALLLVHSLTEA). Residues 58–91 (EYACPAIDKFCEDHCAAKKAVGKCDDFKCNCIKL) enclose the BetaSPN-type CS-alpha/beta domain. 3 cysteine pairs are disulfide-bonded: cysteine 61-cysteine 81, cysteine 68-cysteine 86, and cysteine 72-cysteine 88.

This sequence belongs to the long chain scorpion toxin family. Class 2 subfamily. Expressed by the venom gland.

The protein resides in the secreted. May function as a voltage-gated potassium channel blocker and may have cytolytic activity. Is often not detected in the tested venom fractions, suggesting that the toxin is likely subject to frequent processing within the venom. Functionally, specific and reversible blocker of the potassium channel Kv1.2/KCNA2 (IC(50)=544 nM). In terms of biological role, shows cytolytic effects on erythrocytes and induces non-selective pore formation when high concentrations (300 nM) are applied on oocytes. Its function is as follows. Does not cause hemolysis, mast cell degranulation, LDH release, and does not have antimicrobial activity. Does not cause edema and pain. The sequence is that of Tityustoxin-19 from Tityus serrulatus (Brazilian scorpion).